We begin with the raw amino-acid sequence, 992 residues long: Disks large-associated protein 4 (992 aa).

Positions 1–20 (MKGLGDSRPRHLSDSLDPPH) are enriched in basic and acidic residues. Disordered regions lie at residues 1–30 (MKGL…TDRN), 47–66 (PGQN…QLPP), and 157–206 (LEGT…GWWS). The span at 162-171 (GKVGGNGSKK) shows a compositional bias: gly residues. The segment covering 172 to 194 (GGMEDGKGRRAKSKERAKAGEPK) has biased composition (basic and acidic residues). 2 positions are modified to phosphoserine: serine 206 and serine 207. Arginine 291 carries the omega-N-methylarginine modification. Residues 342-396 (STTLLSPRETDAAAEGPIPCRRMRSGSYIKAMGDEDSDESGGSPKPSPKTAARRQ) form a disordered region. Residues serine 378, serine 381, serine 388, serine 405, serine 415, and serine 421 each carry the phosphoserine modification. 3 disordered regions span residues 527-751 (SVSL…GPRQ), 763-798 (SYGD…AQPG), and 915-992 (TPEK…QTRL). The span at 528–554 (VSLQSLSPPPSTGSLSNSRTLPSSSCL) shows a compositional bias: low complexity. Over residues 576–591 (VTVQSSTESAQDTYLD) the composition is skewed to polar residues. Phosphoserine is present on residues serine 580, serine 581, serine 609, serine 611, serine 665, and serine 744. Over residues 600 to 620 (TSQSGLSNSSDSLDSSTRPPS) the composition is skewed to low complexity. At threonine 915 the chain carries Phosphothreonine. 2 stretches are compositionally biased toward basic and acidic residues: residues 915 to 925 (TPEKRKEEKKP) and 940 to 958 (VSRD…EARK). The segment covering 969-978 (VRQNSATESA) has biased composition (polar residues). Serine 973 is modified (phosphoserine).

It belongs to the SAPAP family. Interacts with DLG1 and DLG4/PSD-95.

The protein resides in the membrane. May play a role in the molecular organization of synapses and neuronal cell signaling. Could be an adapter protein linking ion channel to the subsynaptic cytoskeleton. May induce enrichment of PSD-95/SAP90 at the plasma membrane. In Homo sapiens (Human), this protein is Disks large-associated protein 4 (DLGAP4).